Reading from the N-terminus, the 779-residue chain is Endonuclease MutS2 (779 aa).

328–335 (GPNTGGKT) is a binding site for ATP. The 76-residue stretch at 704–779 (LDLRGKRYEE…GSGATIVTLG (76 aa)) folds into the Smr domain.

It belongs to the DNA mismatch repair MutS family. MutS2 subfamily. Homodimer. Binds to stalled ribosomes, contacting rRNA.

In terms of biological role, endonuclease that is involved in the suppression of homologous recombination and thus may have a key role in the control of bacterial genetic diversity. Its function is as follows. Acts as a ribosome collision sensor, splitting the ribosome into its 2 subunits. Detects stalled/collided 70S ribosomes which it binds and splits by an ATP-hydrolysis driven conformational change. Acts upstream of the ribosome quality control system (RQC), a ribosome-associated complex that mediates the extraction of incompletely synthesized nascent chains from stalled ribosomes and their subsequent degradation. Probably generates substrates for RQC. This chain is Endonuclease MutS2, found in Streptococcus pyogenes serotype M18 (strain MGAS8232).